Here is a 148-residue protein sequence, read N- to C-terminus: MKALLTLGLLLLSVTAQAKVYNRCELARILKRNGMDGYRGVKLADWVCLAQHESNYNTRATNYNRGDRSTDYGIFQINSRYWCNDGKTPRSKNACGINCSALLQDDITAAIQCAKRVVRDPQGIRAWVAWRTQCQNRDLSQYIRNCGV.

Positions methionine 1–alanine 18 are cleaved as a signal peptide. Positions lysine 19 to valine 148 constitute a C-type lysozyme domain. 4 cysteine pairs are disulfide-bonded: cysteine 24-cysteine 146, cysteine 48-cysteine 134, cysteine 83-cysteine 99, and cysteine 95-cysteine 113. Residues glutamate 53 and aspartate 71 contribute to the active site.

It belongs to the glycosyl hydrolase 22 family. Monomer. In terms of tissue distribution, expressed strongly only in small intestine.

It localises to the secreted. It catalyses the reaction Hydrolysis of (1-&gt;4)-beta-linkages between N-acetylmuramic acid and N-acetyl-D-glucosamine residues in a peptidoglycan and between N-acetyl-D-glucosamine residues in chitodextrins.. Functionally, lysozymes have primarily a bacteriolytic function; those in tissues and body fluids are associated with the monocyte-macrophage system and enhance the activity of immunoagents. Lyz1 is active against a range of Gram-positive and Gram-negative bacteria. Less effective than Lyz2 in killing Gram-negative bacteria. Lyz1 and Lyz2 are equally effective in killing Gram-positive bacteria. The chain is Lysozyme C-1 (Lyz1) from Mus musculus (Mouse).